Consider the following 391-residue polypeptide: Protein kinase ORF14 (391 aa).

The Protein kinase domain maps to Val-109–Ile-391. Lys-134 provides a ligand contact to ATP. The Proton acceptor role is filled by Asp-235.

This sequence belongs to the protein kinase superfamily. Ser/Thr protein kinase family.

The enzyme catalyses L-seryl-[protein] + ATP = O-phospho-L-seryl-[protein] + ADP + H(+). It catalyses the reaction L-threonyl-[protein] + ATP = O-phospho-L-threonyl-[protein] + ADP + H(+). In Ictalurid herpesvirus 1 (strain Auburn) (IcHV-1), this protein is Protein kinase ORF14 (ORF14).